A 413-amino-acid chain; its full sequence is Peptidase T (413 aa).

A Zn(2+)-binding site is contributed by H82. The active site involves D84. D145 is a binding site for Zn(2+). E179 (proton acceptor) is an active-site residue. Residues E180, D202, and H384 each contribute to the Zn(2+) site.

The protein belongs to the peptidase M20B family. Requires Zn(2+) as cofactor.

The protein localises to the cytoplasm. It catalyses the reaction Release of the N-terminal residue from a tripeptide.. Functionally, cleaves the N-terminal amino acid of tripeptides. The protein is Peptidase T of Latilactobacillus sakei subsp. sakei (strain 23K) (Lactobacillus sakei subsp. sakei).